The following is a 149-amino-acid chain: Calmodulin (149 aa).

Position 2 is an N-acetylalanine (alanine 2). EF-hand domains follow at residues 8 to 43 (EQIAEFKEAFSLFDKDGDGCITTKELGTVMRSLGQN), 44 to 79 (PTEAELQDMISEVDADQNGTIDFPEFLNLMARKMKD), 81 to 116 (DSEEELKEAFKVFDKDQNGFISAAELRHVMTNLGEK), and 117 to 149 (LTDEEVDEMIREADIDGDGQVNYEEFVRMMLAK). Aspartate 21, aspartate 23, aspartate 25, cysteine 27, glutamate 32, aspartate 57, aspartate 59, asparagine 61, threonine 63, glutamate 68, aspartate 94, aspartate 96, asparagine 98, and glutamate 105 together coordinate Ca(2+). Lysine 116 is subject to N6,N6,N6-trimethyllysine. 5 residues coordinate Ca(2+): aspartate 130, aspartate 132, aspartate 134, glutamine 136, and glutamate 141.

It belongs to the calmodulin family.

In terms of biological role, calmodulin mediates the control of a large number of enzymes, ion channels and other proteins by Ca(2+). Among the enzymes to be stimulated by the calmodulin-Ca(2+) complex are a number of protein kinases and phosphatases. This is Calmodulin (CALM1) from Solanum lycopersicum (Tomato).